Reading from the N-terminus, the 151-residue chain is MRCPYCGYEETRVLDSRVDSSGMTVRRRRECVKCKGRFTTYERYEFGPVFVVKKDGKREKFDRAKILNGVMKACEKTNVTLEEIEKLVDDVVNDVQKSGNLEILTLEIGKLVMEKLKKLNGVAYVRFASVYKDFREIDQFLEVVEELKKEK.

A zinc finger spans residues 3 to 34 (CPYCGYEETRVLDSRVDSSGMTVRRRRECVKC). In terms of domain architecture, ATP-cone spans 49 to 139 (VFVVKKDGKR…VYKDFREIDQ (91 aa)).

The protein belongs to the NrdR family. Zn(2+) is required as a cofactor.

In terms of biological role, negatively regulates transcription of bacterial ribonucleotide reductase nrd genes and operons by binding to NrdR-boxes. This Thermosipho melanesiensis (strain DSM 12029 / CIP 104789 / BI429) protein is Transcriptional repressor NrdR.